The sequence spans 152 residues: Deoxyuridine 5'-triphosphate nucleotidohydrolase (152 aa).

Residues 71-73 (RSG), N84, 88-90 (LID), and M98 each bind substrate.

The protein belongs to the dUTPase family. Requires Mg(2+) as cofactor.

It carries out the reaction dUTP + H2O = dUMP + diphosphate + H(+). It participates in pyrimidine metabolism; dUMP biosynthesis; dUMP from dCTP (dUTP route): step 2/2. This enzyme is involved in nucleotide metabolism: it produces dUMP, the immediate precursor of thymidine nucleotides and it decreases the intracellular concentration of dUTP so that uracil cannot be incorporated into DNA. The sequence is that of Deoxyuridine 5'-triphosphate nucleotidohydrolase from Aeromonas salmonicida (strain A449).